We begin with the raw amino-acid sequence, 461 residues long: Chromosomal replication initiator protein DnaA (461 aa).

Residues 1 to 84 form a domain I, interacts with DnaA modulators region; the sequence is MAVSLWQQCI…RFDIGSRPSA (84 aa). The domain II stretch occupies residues 84-124; that stretch reads AKKFEPAPVATVRAPNTQTKATVGTYFNTQAEPIANANHRS. The segment at 125–341 is domain III, AAA+ region; sequence NINPTYQFDN…GALNRVIANA (217 aa). ATP-binding residues include Gly169, Gly171, Lys172, and Thr173. Positions 342–461 are domain IV, binds dsDNA; the sequence is NFTGRPITID…YANLIRTLSS (120 aa).

The protein belongs to the DnaA family. In terms of assembly, oligomerizes as a right-handed, spiral filament on DNA at oriC.

It localises to the cytoplasm. Functionally, plays an essential role in the initiation and regulation of chromosomal replication. ATP-DnaA binds to the origin of replication (oriC) to initiate formation of the DNA replication initiation complex once per cell cycle. Binds the DnaA box (a 9 base pair repeat at the origin) and separates the double-stranded (ds)DNA. Forms a right-handed helical filament on oriC DNA; dsDNA binds to the exterior of the filament while single-stranded (ss)DNA is stabiized in the filament's interior. The ATP-DnaA-oriC complex binds and stabilizes one strand of the AT-rich DNA unwinding element (DUE), permitting loading of DNA polymerase. After initiation quickly degrades to an ADP-DnaA complex that is not apt for DNA replication. Binds acidic phospholipids. The chain is Chromosomal replication initiator protein DnaA from Shewanella putrefaciens (strain CN-32 / ATCC BAA-453).